The chain runs to 288 residues: UDP-3-O-acyl-N-acetylglucosamine deacetylase (288 aa).

Zn(2+)-binding residues include His79, His236, and Asp240. His263 acts as the Proton donor in catalysis.

The protein belongs to the LpxC family. Zn(2+) serves as cofactor.

It catalyses the reaction a UDP-3-O-[(3R)-3-hydroxyacyl]-N-acetyl-alpha-D-glucosamine + H2O = a UDP-3-O-[(3R)-3-hydroxyacyl]-alpha-D-glucosamine + acetate. The protein operates within glycolipid biosynthesis; lipid IV(A) biosynthesis; lipid IV(A) from (3R)-3-hydroxytetradecanoyl-[acyl-carrier-protein] and UDP-N-acetyl-alpha-D-glucosamine: step 2/6. Functionally, catalyzes the hydrolysis of UDP-3-O-myristoyl-N-acetylglucosamine to form UDP-3-O-myristoylglucosamine and acetate, the committed step in lipid A biosynthesis. The protein is UDP-3-O-acyl-N-acetylglucosamine deacetylase of Rickettsia bellii (strain OSU 85-389).